The chain runs to 135 residues: Holo-[acyl-carrier-protein] synthase (135 aa).

Mg(2+) contacts are provided by Asp9 and Glu63.

It belongs to the P-Pant transferase superfamily. AcpS family. Requires Mg(2+) as cofactor.

The protein localises to the cytoplasm. It carries out the reaction apo-[ACP] + CoA = holo-[ACP] + adenosine 3',5'-bisphosphate + H(+). Transfers the 4'-phosphopantetheine moiety from coenzyme A to a Ser of acyl-carrier-protein. The sequence is that of Holo-[acyl-carrier-protein] synthase from Paraburkholderia phymatum (strain DSM 17167 / CIP 108236 / LMG 21445 / STM815) (Burkholderia phymatum).